A 512-amino-acid chain; its full sequence is Podocan-like protein 1 (512 aa).

Residues 1–26 form the signal peptide; it reads MAESGLAMWPSLLLLLLLPGPPPVAG. The LRRNT domain maps to 37–74; that stretch reads ESLQPLPRACPLRCSCPRVDTVDCDGLDLRVFPDNITR. N-linked (GlcNAc...) asparagine glycosylation occurs at asparagine 71. LRR repeat units lie at residues 75–96, 99–119, 125–146, 147–167, 170–193, 196–216, 217–238, 241–261, 267–288, 289–309, 312–332, 338–359, 360–380, 383–396, 409–430, 431–451, and 454–474; these read AAQHLSLQNNQLQELPYNELSR, GLRTLNLHNNLISSEGLPDEA, QLQHLCVAHNKLSVAPQFLPRS, LRVADLAANQVMEIFPLTFGE, ALRSVYLHNNQLSNAGLPPDAFRG, AIATLSLSNNQLSYLPPSLPP, SLERLHLQNNLISKVPRGALSR, QLRELYLQHNQLTDSGLDATT, SLEYLDLSHNQLTTVPAGLPRT, LAILHLGRNRIRQVEAARLHG, GLRYLLLQHNQLGSSGLPAGA, GLHTLHLYGNGLDRVPPALPRR, LRALVLPHNHVAALGARDLVA, GLTELNLAYNRLAS, ALRSLDLAGNQLTRLPMGLPTG, LRTLQLQRNQLRMLEPEPLAG, and QLRELSLAHNRLRVGDIGPGT.

This sequence belongs to the small leucine-rich proteoglycan (SLRP) family. SLRP class V subfamily. In terms of processing, N-glycosylated.

The protein localises to the secreted. It is found in the extracellular space. The protein resides in the extracellular matrix. The sequence is that of Podocan-like protein 1 (PODNL1) from Homo sapiens (Human).